The following is a 236-amino-acid chain: Leucyl/phenylalanyl-tRNA--protein transferase (236 aa).

It belongs to the L/F-transferase family.

The protein resides in the cytoplasm. The enzyme catalyses N-terminal L-lysyl-[protein] + L-leucyl-tRNA(Leu) = N-terminal L-leucyl-L-lysyl-[protein] + tRNA(Leu) + H(+). It catalyses the reaction N-terminal L-arginyl-[protein] + L-leucyl-tRNA(Leu) = N-terminal L-leucyl-L-arginyl-[protein] + tRNA(Leu) + H(+). The catalysed reaction is L-phenylalanyl-tRNA(Phe) + an N-terminal L-alpha-aminoacyl-[protein] = an N-terminal L-phenylalanyl-L-alpha-aminoacyl-[protein] + tRNA(Phe). Functionally, functions in the N-end rule pathway of protein degradation where it conjugates Leu, Phe and, less efficiently, Met from aminoacyl-tRNAs to the N-termini of proteins containing an N-terminal arginine or lysine. This Nitrosomonas europaea (strain ATCC 19718 / CIP 103999 / KCTC 2705 / NBRC 14298) protein is Leucyl/phenylalanyl-tRNA--protein transferase.